We begin with the raw amino-acid sequence, 418 residues long: BTB and MATH domain-containing protein 41 (418 aa).

The interval 1–33 is disordered; it reads MEINNGAQPENAAVSIPSRSPSGKSEKRKSPSI. In terms of domain architecture, MATH spans 45–173; it reads SFTNYWSVER…NDILTIGCEL (129 aa). Residues 232–293 enclose the BTB domain; it reads SDFIIVASCG…TLDVLLRHMY (62 aa).

In terms of assembly, interacts with cul-3.

It functions in the pathway protein modification; protein ubiquitination. In terms of biological role, probable substrate-specific adapter of an E3 ubiquitin-protein ligase complex which mediates the ubiquitination and subsequent proteasomal degradation of target proteins. In Caenorhabditis elegans, this protein is BTB and MATH domain-containing protein 41 (bath-41).